The following is a 236-amino-acid chain: Mitochondrial coenzyme A diphosphatase NUDT8 (236 aa).

Positions 25-172 (LRARPASAAV…HFRYTLPVFL (148 aa)) constitute a Nudix hydrolase domain. Lys70 bears the N6-succinyllysine mark. Positions 70–91 (KCDPADQDVVHTALRETREELG) match the Nudix box motif. Residues Glu85 and Glu89 each coordinate Mg(2+).

Belongs to the Nudix hydrolase family. In terms of assembly, monomer. Requires Mg(2+) as cofactor. Mn(2+) serves as cofactor.

Its subcellular location is the mitochondrion. It carries out the reaction an acyl-CoA + H2O = an acyl-4'-phosphopantetheine + adenosine 3',5'-bisphosphate + 2 H(+). The enzyme catalyses CoA + H2O = (R)-4'-phosphopantetheine + adenosine 3',5'-bisphosphate + 2 H(+). The catalysed reaction is acetyl-CoA + H2O = S-acetyl-4'-phosphopantetheine + adenosine 3',5'-bisphosphate + 2 H(+). It catalyses the reaction butanoyl-CoA + H2O = S-butanoyl-4'-phosphopantetheine + adenosine 3',5'-bisphosphate + 2 H(+). It carries out the reaction hexanoyl-CoA + H2O = hexanoyl-4'-phosphopantetheine + adenosine 3',5'-bisphosphate + 2 H(+). The enzyme catalyses octanoyl-CoA + H2O = S-octanoyl-4'-phosphopantetheine + adenosine 3',5'-bisphosphate + 2 H(+). The catalysed reaction is propanoyl-CoA + H2O = propanoyl-4'-phosphopantetheine + adenosine 3',5'-bisphosphate + 2 H(+). It catalyses the reaction malonyl-CoA + H2O = malonyl-4'-phosphopantetheine + adenosine 3',5'-bisphosphate + 2 H(+). It carries out the reaction succinyl-CoA + H2O = succinyl-4'-phosphopantetheine + adenosine 3',5'-bisphosphate + 2 H(+). The enzyme catalyses a 5'-end CoA-ribonucleoside in mRNA + H2O = a 5'-end phospho-adenosine-phospho-ribonucleoside in mRNA + (R)-4'-phosphopantetheine + 2 H(+). In terms of biological role, acyl-CoA diphosphatase that mediates the hydrolysis of a wide range of CoA and CoA esters yielding 3',5'-ADP and the corresponding 4'-phosphopantetheine derivative as products. Hydrolyzes short- and medium-chain acyl-CoAs, exhibiting the highest activity toward free CoA, hexanoyl-CoA, and octanoyl-CoA and the lowest activity against acetyl-CoA. Exhibits decapping activity towards dpCoA-capped RNAs in vitro. The polypeptide is Mitochondrial coenzyme A diphosphatase NUDT8 (NUDT8) (Homo sapiens (Human)).